Consider the following 325-residue polypeptide: tRNA N6-adenosine threonylcarbamoyltransferase (325 aa).

His110 and His114 together coordinate Fe cation. Substrate contacts are provided by residues 133-137, Asp165, Gly178, and Asn268; that span reads MVSGG. Asp296 contacts Fe cation.

The protein belongs to the KAE1 / TsaD family. The cofactor is Fe(2+).

Its subcellular location is the cytoplasm. It catalyses the reaction L-threonylcarbamoyladenylate + adenosine(37) in tRNA = N(6)-L-threonylcarbamoyladenosine(37) in tRNA + AMP + H(+). In terms of biological role, required for the formation of a threonylcarbamoyl group on adenosine at position 37 (t(6)A37) in tRNAs that read codons beginning with adenine. Is involved in the transfer of the threonylcarbamoyl moiety of threonylcarbamoyl-AMP (TC-AMP) to the N6 group of A37, together with TsaE and TsaB. TsaD likely plays a direct catalytic role in this reaction. In Thermosipho melanesiensis (strain DSM 12029 / CIP 104789 / BI429), this protein is tRNA N6-adenosine threonylcarbamoyltransferase.